The chain runs to 120 residues: Large ribosomal subunit protein bL20 (120 aa).

The protein belongs to the bacterial ribosomal protein bL20 family.

Binds directly to 23S ribosomal RNA and is necessary for the in vitro assembly process of the 50S ribosomal subunit. It is not involved in the protein synthesizing functions of that subunit. The chain is Large ribosomal subunit protein bL20 from Mesoplasma florum (strain ATCC 33453 / NBRC 100688 / NCTC 11704 / L1) (Acholeplasma florum).